We begin with the raw amino-acid sequence, 226 residues long: Small ribosomal subunit protein uS3 (226 aa).

In terms of domain architecture, KH type-2 spans 36–104 (IRKYLENRLS…KIQINIFEIK (69 aa)).

Belongs to the universal ribosomal protein uS3 family. In terms of assembly, part of the 30S ribosomal subunit. Forms a tight complex with proteins S10 and S14.

Binds the lower part of the 30S subunit head. Binds mRNA in the 70S ribosome, positioning it for translation. In Karelsulcia muelleri (strain GWSS) (Sulcia muelleri), this protein is Small ribosomal subunit protein uS3.